The sequence spans 366 residues: Uroporphyrinogen decarboxylase (366 aa).

Residues 28-32 (RQAGR), D78, Y160, T215, and H333 each bind substrate.

This sequence belongs to the uroporphyrinogen decarboxylase family. Homodimer.

The protein localises to the cytoplasm. It catalyses the reaction uroporphyrinogen III + 4 H(+) = coproporphyrinogen III + 4 CO2. Its pathway is porphyrin-containing compound metabolism; protoporphyrin-IX biosynthesis; coproporphyrinogen-III from 5-aminolevulinate: step 4/4. In terms of biological role, catalyzes the decarboxylation of four acetate groups of uroporphyrinogen-III to yield coproporphyrinogen-III. This Paraburkholderia phytofirmans (strain DSM 17436 / LMG 22146 / PsJN) (Burkholderia phytofirmans) protein is Uroporphyrinogen decarboxylase.